Reading from the N-terminus, the 175-residue chain is Adenine phosphoribosyltransferase (175 aa).

This sequence belongs to the purine/pyrimidine phosphoribosyltransferase family. Homodimer.

The protein resides in the cytoplasm. It catalyses the reaction AMP + diphosphate = 5-phospho-alpha-D-ribose 1-diphosphate + adenine. Its pathway is purine metabolism; AMP biosynthesis via salvage pathway; AMP from adenine: step 1/1. In terms of biological role, catalyzes a salvage reaction resulting in the formation of AMP, that is energically less costly than de novo synthesis. The protein is Adenine phosphoribosyltransferase of Lacticaseibacillus paracasei (strain ATCC 334 / BCRC 17002 / CCUG 31169 / CIP 107868 / KCTC 3260 / NRRL B-441) (Lactobacillus paracasei).